The sequence spans 148 residues: Mediator of RNA polymerase II transcription subunit 31 (148 aa).

This sequence belongs to the Mediator complex subunit 31 family. In terms of assembly, component of the Mediator complex.

The protein localises to the nucleus. Component of the Mediator complex, a coactivator involved in the regulated transcription of nearly all RNA polymerase II-dependent genes. Mediator functions as a bridge to convey information from gene-specific regulatory proteins to the basal RNA polymerase II transcription machinery. Mediator is recruited to promoters by direct interactions with regulatory proteins and serves as a scaffold for the assembly of a functional preinitiation complex with RNA polymerase II and the general transcription factors. This is Mediator of RNA polymerase II transcription subunit 31 from Taenia solium (Pork tapeworm).